A 442-amino-acid chain; its full sequence is 5-methylthioadenosine/S-adenosylhomocysteine deaminase (442 aa).

The Zn(2+) site is built by histidine 72 and histidine 74. Substrate contacts are provided by glutamate 101 and histidine 194. Histidine 221 serves as a coordination point for Zn(2+). Substrate-binding residues include glutamate 224 and aspartate 309. Aspartate 309 contacts Zn(2+).

This sequence belongs to the metallo-dependent hydrolases superfamily. MTA/SAH deaminase family. The cofactor is Zn(2+).

It catalyses the reaction S-adenosyl-L-homocysteine + H2O + H(+) = S-inosyl-L-homocysteine + NH4(+). The catalysed reaction is S-methyl-5'-thioadenosine + H2O + H(+) = S-methyl-5'-thioinosine + NH4(+). Catalyzes the deamination of 5-methylthioadenosine and S-adenosyl-L-homocysteine into 5-methylthioinosine and S-inosyl-L-homocysteine, respectively. Is also able to deaminate adenosine. This chain is 5-methylthioadenosine/S-adenosylhomocysteine deaminase, found in Teredinibacter turnerae (strain ATCC 39867 / T7901).